A 191-amino-acid chain; its full sequence is Elongation factor P (191 aa).

Lys34 carries the N6-(3,6-diaminohexanoyl)-5-hydroxylysine modification.

This sequence belongs to the elongation factor P family. In terms of processing, may be beta-lysylated on the epsilon-amino group of Lys-34 by the combined action of EpmA and EpmB, and then hydroxylated on the C5 position of the same residue by EpmC (if this protein is present). Lysylation is critical for the stimulatory effect of EF-P on peptide-bond formation. The lysylation moiety may extend toward the peptidyltransferase center and stabilize the terminal 3-CCA end of the tRNA. Hydroxylation of the C5 position on Lys-34 may allow additional potential stabilizing hydrogen-bond interactions with the P-tRNA.

It is found in the cytoplasm. The protein operates within protein biosynthesis; polypeptide chain elongation. Involved in peptide bond synthesis. Alleviates ribosome stalling that occurs when 3 or more consecutive Pro residues or the sequence PPG is present in a protein, possibly by augmenting the peptidyl transferase activity of the ribosome. Modification of Lys-34 is required for alleviation. This Colwellia psychrerythraea (strain 34H / ATCC BAA-681) (Vibrio psychroerythus) protein is Elongation factor P.